A 392-amino-acid polypeptide reads, in one-letter code: Sulfate adenylyltransferase (392 aa).

Belongs to the sulfate adenylyltransferase family.

It catalyses the reaction sulfate + ATP + H(+) = adenosine 5'-phosphosulfate + diphosphate. Its pathway is sulfur metabolism; hydrogen sulfide biosynthesis; sulfite from sulfate: step 1/3. This chain is Sulfate adenylyltransferase, found in Trichormus variabilis (strain ATCC 29413 / PCC 7937) (Anabaena variabilis).